We begin with the raw amino-acid sequence, 357 residues long: Tribbles homolog 3 (357 aa).

Residues 1-63 (MRASPLAVPA…PAPVHAPDVT (63 aa)) are disordered. Residues 1-127 (MRASPLAVPA…GHVARPAEVL (127 aa)) form an interaction with DDIT3/CHOP region. The Protein kinase domain maps to 68–316 (LGPYVLLEPE…SGILLHPWLR (249 aa)). Residues 333–357 (DQVVPEGPGLEEAEEEGERDMGLYG) are disordered. Positions 341–350 (GLEEAEEEGE) are enriched in acidic residues.

The protein belongs to the protein kinase superfamily. CAMK Ser/Thr protein kinase family. Tribbles subfamily. Interacts with AKT1, AKT2, MAP2K1 and MAP2K7. Interacts with ATF4. Interacts with DDIT3/CHOP and inhibits its interaction with EP300/P300. Interacts with APOBEC3C. Interacts (via N-terminus) with APOBEC3A. Interacts with RELA.

It is found in the nucleus. Functionally, inactive protein kinase which acts as a regulator of the integrated stress response (ISR), a process for adaptation to various stress. Inhibits the transcriptional activity of DDIT3/CHOP and is involved in DDIT3/CHOP-dependent cell death during ER stress. May play a role in programmed neuronal cell death but does not appear to affect non-neuronal cells. Acts as a negative feedback regulator of the ATF4-dependent transcription during the ISR: while TRIB3 expression is promoted by ATF4, TRIB3 protein interacts with ATF4 and inhibits ATF4 transcription activity. Disrupts insulin signaling by binding directly to Akt kinases and blocking their activation. May bind directly to and mask the 'Thr-308' phosphorylation site in AKT1. Interacts with the NF-kappa-B transactivator p65 RELA and inhibits its phosphorylation and thus its transcriptional activation activity. Interacts with MAPK kinases and regulates activation of MAP kinases. Can inhibit APOBEC3A editing of nuclear DNA. The polypeptide is Tribbles homolog 3 (TRIB3) (Bos taurus (Bovine)).